An 869-amino-acid chain; its full sequence is Ubiquitin carboxyl-terminal hydrolase 29 (869 aa).

Polar residues-rich tracts occupy residues 104-120 (SSTP…MSSQ) and 140-150 (SLNTTPESGTP). Residues 104-226 (SSTPCESQQP…KAVTLREQEK (123 aa)) form a disordered region. Residues 187-200 (VNKDIPKENTPDQK) show a composition bias toward basic and acidic residues. Residues 201–212 (KKSRRYYSRNRG) show a composition bias toward basic residues. A compositionally biased stretch (basic and acidic residues) spans 213–226 (GKAEKAVTLREQEK). In terms of domain architecture, USP spans 289–826 (EGFPNLGNTC…SGYIFFYMHN (538 aa)). Catalysis depends on C298, which acts as the Nucleophile. Residues 723–754 (SQEDPEKDLSRSPELQEDDPHSFAFGSDDSKD) form a disordered region. The Proton acceptor role is filled by H781.

The protein belongs to the peptidase C19 family. Predominantly expressed in brain and testis. Highest expression levels in adult brain, especially in the cerebral cortex and hippocampus, and in the forebrain, face, and limb buds of midgestation mouse embryos.

It is found in the cytoplasm. It localises to the perinuclear region. It catalyses the reaction Thiol-dependent hydrolysis of ester, thioester, amide, peptide and isopeptide bonds formed by the C-terminal Gly of ubiquitin (a 76-residue protein attached to proteins as an intracellular targeting signal).. Its function is as follows. Deubiquitinase involved in innate antiviral immunity by mediating 'Lys-48'-linked deubiquitination of CGAS, thereby promoting its stabilization. This is Ubiquitin carboxyl-terminal hydrolase 29 from Mus musculus (Mouse).